A 609-amino-acid chain; its full sequence is Glutamine--fructose-6-phosphate aminotransferase [isomerizing] (609 aa).

Cys2 acts as the Nucleophile; for GATase activity in catalysis. In terms of domain architecture, Glutamine amidotransferase type-2 spans 2–218 (CGIVGAIAQR…EGDIAEITRR (217 aa)). SIS domains lie at 286 to 426 (ADEL…LKGL) and 458 to 599 (LAED…VDQP). Lys604 functions as the For Fru-6P isomerization activity in the catalytic mechanism.

Homodimer.

The protein resides in the cytoplasm. The catalysed reaction is D-fructose 6-phosphate + L-glutamine = D-glucosamine 6-phosphate + L-glutamate. Functionally, catalyzes the first step in hexosamine metabolism, converting fructose-6P into glucosamine-6P using glutamine as a nitrogen source. The polypeptide is Glutamine--fructose-6-phosphate aminotransferase [isomerizing] (Escherichia coli O157:H7).